The chain runs to 300 residues: Ribonuclease HIII (300 aa).

An RNase H type-2 domain is found at 86–300 (RSRIGVDESG…FNEVLGSGNQ (215 aa)). 3 residues coordinate a divalent metal cation: Asp92, Glu93, and Asp196.

This sequence belongs to the RNase HII family. RnhC subfamily. It depends on Mn(2+) as a cofactor. Requires Mg(2+) as cofactor.

It localises to the cytoplasm. It catalyses the reaction Endonucleolytic cleavage to 5'-phosphomonoester.. Its function is as follows. Endonuclease that specifically degrades the RNA of RNA-DNA hybrids. In Chlamydia trachomatis serovar L2 (strain ATCC VR-902B / DSM 19102 / 434/Bu), this protein is Ribonuclease HIII.